Consider the following 237-residue polypeptide: Peptidase E (237 aa).

Catalysis depends on charge relay system residues Ser-122, Asp-137, and His-159.

This sequence belongs to the peptidase S51 family.

Its subcellular location is the cytoplasm. It carries out the reaction Dipeptidase E catalyzes the hydrolysis of dipeptides Asp-|-Xaa. It does not act on peptides with N-terminal Glu, Asn or Gln, nor does it cleave isoaspartyl peptides.. Functionally, hydrolyzes dipeptides containing N-terminal aspartate residues. May play a role in allowing the cell to use peptide aspartate to spare carbon otherwise required for the synthesis of the aspartate family of amino acids. The polypeptide is Peptidase E (Shewanella baltica (strain OS155 / ATCC BAA-1091)).